The sequence spans 246 residues: Acetoacetate decarboxylase (246 aa).

Lysine 115 functions as the Schiff-base intermediate with acetoacetate in the catalytic mechanism.

The protein belongs to the ADC family.

It carries out the reaction acetoacetate + H(+) = acetone + CO2. Functionally, catalyzes the conversion of acetoacetate to acetone and carbon dioxide. The polypeptide is Acetoacetate decarboxylase (Clostridium beijerinckii (Clostridium MP)).